The primary structure comprises 92 residues: Acylphosphatase (92 aa).

In terms of domain architecture, Acylphosphatase-like spans 5–90; the sequence is TYRLVICGLV…GDFVGFQLRE (86 aa). Catalysis depends on residues R20 and N38.

It belongs to the acylphosphatase family.

The catalysed reaction is an acyl phosphate + H2O = a carboxylate + phosphate + H(+). In Albidiferax ferrireducens (strain ATCC BAA-621 / DSM 15236 / T118) (Rhodoferax ferrireducens), this protein is Acylphosphatase (acyP).